A 503-amino-acid chain; its full sequence is von Willebrand factor A domain-containing protein 1 (503 aa).

Residues 1-21 form the signal peptide; the sequence is MEVRKALTCVFLTVFLCSGDA. The 178-residue stretch at 36–213 folds into the VWFA domain; it reads DVLFLLDSSG…IIGEDLRNSI (178 aa). Fibronectin type-III domains are found at residues 218 to 324 and 331 to 423; these read RAER…TVNP and LLSS…VLPA.

Homodimer or homomultimer; disulfide-linked.

The protein localises to the secreted. It is found in the extracellular space. The protein resides in the extracellular matrix. It localises to the basement membrane. Its function is as follows. Promotes matrix assembly. Involved in the organization of skeletal muscles and in the formation of neuromuscular junctions. In Danio rerio (Zebrafish), this protein is von Willebrand factor A domain-containing protein 1.